The sequence spans 148 residues: Ubiquitin-conjugating enzyme E2 11 (148 aa).

The UBC core domain occupies M1–M147. C85 (glycyl thioester intermediate) is an active-site residue.

Belongs to the ubiquitin-conjugating enzyme family. Interacts with the E3 ubiquitin-protein ligases MBR1 and MBR2. Ubiquitously expressed. Mainly in petals.

It carries out the reaction S-ubiquitinyl-[E1 ubiquitin-activating enzyme]-L-cysteine + [E2 ubiquitin-conjugating enzyme]-L-cysteine = [E1 ubiquitin-activating enzyme]-L-cysteine + S-ubiquitinyl-[E2 ubiquitin-conjugating enzyme]-L-cysteine.. It functions in the pathway protein modification; protein ubiquitination. Accepts the ubiquitin from the E1 complex and catalyzes its covalent attachment to other proteins. Mediates the selective degradation of short-lived and abnormal proteins. This Arabidopsis thaliana (Mouse-ear cress) protein is Ubiquitin-conjugating enzyme E2 11 (UBC11).